We begin with the raw amino-acid sequence, 75 residues long: Protein SlyX homolog (75 aa).

This sequence belongs to the SlyX family.

The chain is Protein SlyX homolog from Chromobacterium violaceum (strain ATCC 12472 / DSM 30191 / JCM 1249 / CCUG 213 / NBRC 12614 / NCIMB 9131 / NCTC 9757 / MK).